Here is an 874-residue protein sequence, read N- to C-terminus: Speckle targeted PIP5K1A-regulated poly(A) polymerase (874 aa).

Residues phenylalanine 16–leucine 46 form a Matrin-type zinc finger. Residues arginine 56–glutamine 128 form the RRM domain. The tract at residues glutamine 113–serine 146 is disordered. Serine 205 lines the ATP pocket. Positions 216 and 218 each coordinate Mg(2+). Residues aspartate 216 and aspartate 218 each contribute to the UTP site. The segment at glutamine 252–lysine 334 is disordered. Over residues alanine 259–serine 269 the composition is skewed to pro residues. Polar residues predominate over residues threonine 280–aspartate 291. ATP is bound at residue asparagine 392. Positions 392, 414, 432, and 549 each coordinate UTP. Positions leucine 491 to histidine 549 constitute a PAP-associated domain. The tract at residues serine 598–lysine 874 is KA1; binds the bulging loops of U6 snRNA but is dispensable for terminal uridylyltransferase activity. 2 disordered regions span residues alanine 638–lysine 662 and methionine 705–proline 761. Phosphoserine is present on serine 750.

Belongs to the DNA polymerase type-B-like family. In terms of assembly, associates with the cleavage and polyadenylation specificity factor (CPSF) complex. Interacts with CPSF1 and CPSF3; the interaction is direct. Interacts with PIP5K1A. Mg(2+) is required as a cofactor. The cofactor is Mn(2+). Post-translationally, phosphorylated by CK1 in the proline-rich (Pro-rich) region. Widely expressed.

Its subcellular location is the nucleus. It is found in the nucleolus. The protein localises to the nucleus speckle. The enzyme catalyses RNA(n) + UTP = RNA(n)-3'-uridine ribonucleotide + diphosphate. It catalyses the reaction RNA(n) + ATP = RNA(n)-3'-adenine ribonucleotide + diphosphate. Adenylyltransferase activity is specifically phosphatidylinositol 4,5-bisphosphate (PtdIns(4,5)P2). Poly(A) polymerase that creates the 3'-poly(A) tail of specific pre-mRNAs. Localizes to nuclear speckles together with PIP5K1A and mediates polyadenylation of a select set of mRNAs, such as HMOX1. In addition to polyadenylation, it is also required for the 3'-end cleavage of pre-mRNAs: binds to the 3'UTR of targeted pre-mRNAs and promotes the recruitment and assembly of the CPSF complex on the 3'UTR of pre-mRNAs. In addition to adenylyltransferase activity, also has uridylyltransferase activity. However, the ATP ratio is higher than UTP in cells, suggesting that it functions primarily as a poly(A) polymerase. Acts as a specific terminal uridylyltransferase for U6 snRNA in vitro: responsible for a controlled elongation reaction that results in the restoration of the four 3'-terminal UMP-residues found in newly transcribed U6 snRNA. Not involved in replication-dependent histone mRNA degradation. The polypeptide is Speckle targeted PIP5K1A-regulated poly(A) polymerase (TUT1) (Homo sapiens (Human)).